Consider the following 201-residue polypeptide: Large ribosomal subunit protein uL4 (201 aa).

The tract at residues 44-68 (KAQKTRSEVAGTTKKSKKQKGGGAR) is disordered.

Belongs to the universal ribosomal protein uL4 family. As to quaternary structure, part of the 50S ribosomal subunit.

In terms of biological role, one of the primary rRNA binding proteins, this protein initially binds near the 5'-end of the 23S rRNA. It is important during the early stages of 50S assembly. It makes multiple contacts with different domains of the 23S rRNA in the assembled 50S subunit and ribosome. Forms part of the polypeptide exit tunnel. The polypeptide is Large ribosomal subunit protein uL4 (Xanthomonas axonopodis pv. citri (strain 306)).